The following is a 2136-amino-acid chain: Protein Ycf2 (2136 aa).

Position 1404–1411 (1404–1411 (GPIETGRS)) interacts with ATP.

Belongs to the Ycf2 family.

It is found in the plastid. The protein localises to the chloroplast stroma. Its function is as follows. Probable ATPase of unknown function. Its presence in a non-photosynthetic plant (Epifagus virginiana) and experiments in tobacco indicate that it has an essential function which is probably not related to photosynthesis. In Marchantia polymorpha (Common liverwort), this protein is Protein Ycf2.